The sequence spans 70 residues: ATP synthase subunit c (70 aa).

Transmembrane regions (helical) follow at residues 3-23 (FIAA…GNGM) and 47-67 (FIGV…AFML).

This sequence belongs to the ATPase C chain family. As to quaternary structure, F-type ATPases have 2 components, F(1) - the catalytic core - and F(0) - the membrane proton channel. F(1) has five subunits: alpha(3), beta(3), gamma(1), delta(1), epsilon(1). F(0) has three main subunits: a(1), b(2) and c(10-14). The alpha and beta chains form an alternating ring which encloses part of the gamma chain. F(1) is attached to F(0) by a central stalk formed by the gamma and epsilon chains, while a peripheral stalk is formed by the delta and b chains.

It is found in the cell membrane. In terms of biological role, f(1)F(0) ATP synthase produces ATP from ADP in the presence of a proton or sodium gradient. F-type ATPases consist of two structural domains, F(1) containing the extramembraneous catalytic core and F(0) containing the membrane proton channel, linked together by a central stalk and a peripheral stalk. During catalysis, ATP synthesis in the catalytic domain of F(1) is coupled via a rotary mechanism of the central stalk subunits to proton translocation. Its function is as follows. Key component of the F(0) channel; it plays a direct role in translocation across the membrane. A homomeric c-ring of between 10-14 subunits forms the central stalk rotor element with the F(1) delta and epsilon subunits. The chain is ATP synthase subunit c from Lacticaseibacillus casei (strain BL23) (Lactobacillus casei).